Here is a 102-residue protein sequence, read N- to C-terminus: RNA-binding protein Hfq (102 aa).

The Sm domain occupies 9–68; that stretch reads DPFVNALRRERVPVSIYLVNGIKLQGQIESFDQFVILLKNTVSQMVYKHAISTVVPSRPV. The segment at 63–102 is disordered; it reads VPSRPVSHHSNNAGGGASNNYHHGSNAQGSTAQQDSEETE. A compositionally biased stretch (low complexity) spans 70-88; sequence HHSNNAGGGASNNYHHGSN.

This sequence belongs to the Hfq family. In terms of assembly, homohexamer.

In terms of biological role, RNA chaperone that binds small regulatory RNA (sRNAs) and mRNAs to facilitate mRNA translational regulation in response to envelope stress, environmental stress and changes in metabolite concentrations. Also binds with high specificity to tRNAs. In Salmonella heidelberg (strain SL476), this protein is RNA-binding protein Hfq.